Consider the following 445-residue polypeptide: Acyl-lipid (7-3)-desaturase (445 aa).

One can recognise a Cytochrome b5 heme-binding domain in the interval 11–91 (VAELRAAEVA…MSKFFVGSLD (81 aa)). Heme contacts are provided by H50 and H73. 2 consecutive transmembrane segments (helical) span residues 126–146 (YWLK…YMLL) and 148–168 (GKTL…GLNI). The short motif at 170 to 174 (HDANH) is the Histidine box-1 element. Residues 205 to 210 (HVVMHH) carry the Histidine box-2 motif. Transmembrane regions (helical) follow at residues 247 to 267 (ILPG…LELL), 283 to 303 (LFAP…ALPL), and 312 to 332 (ALCI…FFFI). The Histidine box-3 motif lies at 380 to 384 (QIEHH).

It belongs to the fatty acid desaturase type 1 family. The cofactor is Fe(2+).

The protein resides in the membrane. It carries out the reaction a (7Z,10Z,13Z,16Z,19Z)-docosapentaenoyl-containing glycerolipid + 2 Fe(II)-[cytochrome b5] + O2 + 2 H(+) = a (4Z,7Z,10Z,13Z,16Z,19Z)-docosahexaenoyl-containing glycerolipid + 2 Fe(III)-[cytochrome b5] + 2 H2O. The catalysed reaction is a (7Z,10Z,13Z,16Z)-docosatetraenoyl-containing glycerolipid + 2 Fe(II)-[cytochrome b5] + O2 + 2 H(+) = a (4Z,7Z,10Z,13Z,16Z)-docosapentaenoyl-containing glycerolipid + 2 Fe(III)-[cytochrome b5] + 2 H2O. Functionally, fatty acid desaturase that introduces a cis double bond at the 4-position in 22-carbon polyunsaturated fatty acids that contain a Delta(7) double bond, resulting in the production of delta-4 desaturated fatty acid docosahexanoic acid (DHA). Mediates desaturation of 22:5n-3 and 22:4n-6 into 22:6n-3 and 22:5n-6 respectively. This is Acyl-lipid (7-3)-desaturase from Diacronema lutheri (Unicellular marine alga).